The following is a 689-amino-acid chain: Glycine--tRNA ligase beta subunit (689 aa).

This sequence belongs to the class-II aminoacyl-tRNA synthetase family. As to quaternary structure, tetramer of two alpha and two beta subunits.

It localises to the cytoplasm. It carries out the reaction tRNA(Gly) + glycine + ATP = glycyl-tRNA(Gly) + AMP + diphosphate. In Pectobacterium atrosepticum (strain SCRI 1043 / ATCC BAA-672) (Erwinia carotovora subsp. atroseptica), this protein is Glycine--tRNA ligase beta subunit.